A 29-amino-acid polypeptide reads, in one-letter code: Cytochrome b6-f complex subunit 8 (29 aa).

A helical transmembrane segment spans residues 3 to 23; the sequence is IVSIGWAALMVVFTFSLSLVV.

This sequence belongs to the PetN family. In terms of assembly, the 4 large subunits of the cytochrome b6-f complex are cytochrome b6, subunit IV (17 kDa polypeptide, PetD), cytochrome f and the Rieske protein, while the 4 small subunits are PetG, PetL, PetM and PetN. The complex functions as a dimer.

The protein localises to the plastid. Its subcellular location is the chloroplast thylakoid membrane. Its function is as follows. Component of the cytochrome b6-f complex, which mediates electron transfer between photosystem II (PSII) and photosystem I (PSI), cyclic electron flow around PSI, and state transitions. This Zygnema circumcarinatum (Green alga) protein is Cytochrome b6-f complex subunit 8.